The chain runs to 213 residues: NAD(P)H-hydrate epimerase (213 aa).

In terms of domain architecture, YjeF N-terminal spans 8 to 210 (MYNIEENGHA…KIGIPPEAEK (203 aa)). (6S)-NADPHX is bound at residue 55–59 (NNGGD). K(+) is bound by residues asparagine 56 and aspartate 122. Residues 126–132 (GTGITGE), tyrosine 137, and aspartate 155 each bind (6S)-NADPHX. Serine 158 lines the K(+) pocket.

Belongs to the NnrE/AIBP family. K(+) serves as cofactor.

The enzyme catalyses (6R)-NADHX = (6S)-NADHX. The catalysed reaction is (6R)-NADPHX = (6S)-NADPHX. Functionally, catalyzes the epimerization of the S- and R-forms of NAD(P)HX, a damaged form of NAD(P)H that is a result of enzymatic or heat-dependent hydration. This is a prerequisite for the S-specific NAD(P)H-hydrate dehydratase to allow the repair of both epimers of NAD(P)HX. This Cenarchaeum symbiosum (strain A) protein is NAD(P)H-hydrate epimerase.